A 292-amino-acid polypeptide reads, in one-letter code: Hypoxia responsive morphology factor A (292 aa).

The Bipartite nuclear localization signal signature appears at 48–70 (RRNGRRRNLEYVAQHRRKIARKI). The interval 156-186 (GKEHYSLHLSTLPAIRNAFGDVIFDAIERSP) is RNA recognition motif (RRM)-like domain.

It belongs to the hrmA family.

Its subcellular location is the nucleus. Functionally, hypoxia responsive morphology factor that modulates the expression of the subtelomeric hrmA-associated cluster (HAC) containing genes that alter the hyphal surface (such as reduced total chitin or increased beta-glucan exposure) and perturb inter-hyphal interactions within the developing biofilms, resulting in a loss of vertically aligned polarized growing filaments. Consequently, this hypoxia-typic morphotype (called H-MORPH) with altered biofilm architecture leads to increased hypoxia fitness, increased host inflammation, rapid disease progression, and mortality in a murine model of invasive aspergillosis. In Aspergillus fumigatus (strain CBS 144.89 / FGSC A1163 / CEA10) (Neosartorya fumigata), this protein is Hypoxia responsive morphology factor A.